The sequence spans 103 residues: Large ribosomal subunit protein bL21 (103 aa).

The protein belongs to the bacterial ribosomal protein bL21 family. In terms of assembly, part of the 50S ribosomal subunit. Contacts protein L20.

Its function is as follows. This protein binds to 23S rRNA in the presence of protein L20. The protein is Large ribosomal subunit protein bL21 of Aromatoleum aromaticum (strain DSM 19018 / LMG 30748 / EbN1) (Azoarcus sp. (strain EbN1)).